Consider the following 298-residue polypeptide: Inosose dehydratase (298 aa).

Belongs to the IolE/MocC family. The cofactor is glutathione. It depends on Co(2+) as a cofactor. Mn(2+) serves as cofactor.

It carries out the reaction scyllo-inosose = 3D-3,5/4-trihydroxycyclohexane-1,2-dione + H2O. The protein operates within polyol metabolism; myo-inositol degradation into acetyl-CoA; acetyl-CoA from myo-inositol: step 2/7. In terms of biological role, catalyzes the dehydration of inosose (2-keto-myo-inositol, 2KMI or 2,4,6/3,5-pentahydroxycyclohexanone) to 3D-(3,5/4)-trihydroxycyclohexane-1,2-dione (D-2,3-diketo-4-deoxy-epi-inositol). This is Inosose dehydratase from Bacillus velezensis (strain DSM 23117 / BGSC 10A6 / LMG 26770 / FZB42) (Bacillus amyloliquefaciens subsp. plantarum).